Consider the following 218-residue polypeptide: Translation initiation factor 6 (218 aa).

This sequence belongs to the eIF-6 family.

In terms of biological role, binds to the 50S ribosomal subunit and prevents its association with the 30S ribosomal subunit to form the 70S initiation complex. The polypeptide is Translation initiation factor 6 (Methanosarcina acetivorans (strain ATCC 35395 / DSM 2834 / JCM 12185 / C2A)).